Here is a 54-residue protein sequence, read N- to C-terminus: Califin-C (54 aa).

Cys-25 and Cys-53 are disulfide-bonded. A Leucine amide modification is found at Leu-36.

The protein belongs to the molluscan ELH family. In terms of assembly, this protein consists of a large 36-residue subunit, bound by a single disulfide-bond to a small 18-residue subunit.

Its subcellular location is the secreted. Injected in sexually mature animals califin C excites LB and LC cells of the abdominal ganglion and cause egg-laying. The protein is Califin-C of Aplysia californica (California sea hare).